A 116-amino-acid polypeptide reads, in one-letter code: Photosystem II assembly factor Psb28 protein (116 aa).

Belongs to the Psb28 family. Part of a photosystem II (PSII) assembly intermediate complex PSII-I; crystallized from a strain deleted of psbJ, it forms monomeric PSII before addition of the oxygen evolving complex. PSII-I includes 3 assembly factors not found in mature PSII (Psb27, Psb28 and Psb34). This protein binds to the cytoplasmic face of D1 and D2 (psbA and psbD), contacting CP47 (psbB) directly above the quinone b-binding site.

The protein resides in the cellular thylakoid membrane. Its function is as follows. A photosystem II (PSII) assembly factor that binds PSII during biogenesis, protecting the complex until water splitting is activated. This is Photosystem II assembly factor Psb28 protein from Thermosynechococcus vestitus (strain NIES-2133 / IAM M-273 / BP-1).